Reading from the N-terminus, the 150-residue chain is Con-Ins Im1 (150 aa).

A signal peptide spans 1-25; sequence MATSLLSPLLVAMLGFLLHVHVARA. 4 disulfides stabilise this stretch: cysteine 31-cysteine 133, cysteine 46-cysteine 136, cysteine 58-cysteine 149, and cysteine 135-cysteine 140. A propeptide spans 64-111 (c peptide); sequence GYAGGQRQLRKRTSMIDSDDMEAEGGSRGGFLMSKRRALSYLQKETNP. 4-carboxyglutamate; partial is present on glutamate 144.

The protein belongs to the insulin family. In terms of assembly, heterodimer of A and B chains; disulfide-linked. As to expression, expressed by the venom gland.

The protein resides in the secreted. This venom insulin facilitates prey capture by rapidly inducing hypoglycemic shock. Intraperitoneal injection of this peptide into zebrafish lowers blood glucose with the same potency than human insulin. In vivo, when applied to water, this peptide reduces overall locomotor activity of zebrafish larvae, observed as a significant decrease in the percentage of time spent swimming and movement frequency. The polypeptide is Con-Ins Im1 (Conus imperialis (Imperial cone)).